A 517-amino-acid chain; its full sequence is Legumin A (517 aa).

The signal sequence occupies residues 1–21 (MAKLLALSLSFCFLLLGGCFA). Cystine bridges form between cysteine 31–cysteine 64 and cysteine 107–cysteine 339. The region spanning 36–232 (LDALEPDNRI…AFNVNRHIVD (197 aa)) is the Cupin type-1 1 domain. Residues 249-335 (VKGGLSIISP…SRRQGDNGLE (87 aa)) form a disordered region. The Cupin type-1 2 domain occupies 345–494 (LNIGPSSSPD…TFNLQRNEAR (150 aa)).

It belongs to the 11S seed storage protein (globulins) family. In terms of assembly, hexamer; each subunit is composed of an acidic and a basic chain derived from a single precursor and linked by a disulfide bond.

This protein found in the seeds of many leguminous and non-leguminous plants is the source of sulfur-containing amino acids in seed meals. The polypeptide is Legumin A (LEGA) (Pisum sativum (Garden pea)).